The primary structure comprises 460 residues: Hydroxymethylglutaryl-CoA synthase MYCGRDRAFT_54740 (460 aa).

Residue Ala-35 participates in (3S)-3-hydroxy-3-methylglutaryl-CoA binding. Residue Glu-86 is the Proton donor/acceptor of the active site. (3S)-3-hydroxy-3-methylglutaryl-CoA is bound by residues Cys-120, Asn-158, Thr-162, Ser-212, His-262, Lys-271, Asn-339, and Ser-373. Cys-120 functions as the Acyl-thioester intermediate in the catalytic mechanism. Residue His-262 is the Proton donor/acceptor of the active site.

This sequence belongs to the thiolase-like superfamily. HMG-CoA synthase family.

It carries out the reaction acetoacetyl-CoA + acetyl-CoA + H2O = (3S)-3-hydroxy-3-methylglutaryl-CoA + CoA + H(+). It functions in the pathway siderophore biosynthesis. Hydroxymethylglutaryl-CoA synthase involved in the biosynthesis of a ferrichrome A-like siderophors which may contribute to organismal virulence. The first step of siderophore biosynthesis is performed by the HMG-CoA synthase (HMGS) MYCGRDRAFT_54740 which catalyzes the generation of HMG-CoA and CoA using acetoacetyl-CoA and acetyl-CoA as substrates. The enoyl-CoA isomerase/hydratase MYCGRDRAFT_76805 then catalyzes the conversion of HMG-CoA to methylglutaconyl-CoA. The acyltransferase MYCGRDRAFT_85486 then fuses methylglutaconyl-CoA with hydroxyornithine to yield methylglutaconyl hydroxyornithine. Methylglutaconyl hydroxyornithine is then available for use by the nonribosomal peptide synthetase NRPS2 to generate the ferrichrome A-like siderophore. The sequence is that of Hydroxymethylglutaryl-CoA synthase MYCGRDRAFT_54740 (ERG13) from Zymoseptoria tritici (strain CBS 115943 / IPO323) (Speckled leaf blotch fungus).